The primary structure comprises 29 residues: Cytochrome b6-f complex subunit 8 (29 aa).

The chain crosses the membrane as a helical span at residues 3–23 (IITFGWVAVAAFFALSIAFVV).

This sequence belongs to the PetN family. The 4 large subunits of the cytochrome b6-f complex are cytochrome b6, subunit IV (17 kDa polypeptide, PetD), cytochrome f and the Rieske protein, while the 4 small subunits are PetG, PetL, PetM and PetN. The complex functions as a dimer.

It is found in the cellular thylakoid membrane. Component of the cytochrome b6-f complex, which mediates electron transfer between photosystem II (PSII) and photosystem I (PSI), cyclic electron flow around PSI, and state transitions. The chain is Cytochrome b6-f complex subunit 8 from Synechococcus sp. (strain JA-3-3Ab) (Cyanobacteria bacterium Yellowstone A-Prime).